The primary structure comprises 931 residues: MEIIMRNLCFLLTLVATLLLPGRLIAAALPQDEKLITGQLDNGLRYMIYPHAHPKDQVNLWLQIHTGSLQEEDNELGVAHFVEHMMFNGTKTWPGNKVIETFESMGLRFGRDVNAYTSYDETVYQVSLPTTQKQNLQQVMAIFSEWSNAATFEKLEVDAERGVITEEWRAHQDAKWRTSQARRPFLLANTRNLDREPIGLMDTVATVTPAQLRQFYQRWYQPNNMTFIVVGDIDSKEALALIKDNLSKLPANKAAENRVWPTKAENHLRFNIINDKENRVNGIALYYRLPMVQVNDEQSFIEQAEWSMLVQLFNQRLQERIQSGELKTISGGTARSVKIAPDYQSLFFRVNARDDNMQDAANALMAELATIDQHGFSAEELDDVKSTRLTWLKNAVDQQAERDLRMLTSRLASSSLNNTPFLSPEETYQLSKRLWQQITVQSLAEKWQQLRKNQDAFWEQMVNNEVAAKKALSPAAILALEKEYANKKLAAYVFPGRNLSLTVDADPQAEISSKETLAENLTSLTLSNGARVILAKSAGEEQKLQIIAVSNKGDLSFPAQQKSLIALANKAVSGSGVGELSSSSLKRWSAENSVTMSSKVSGMNTLLSVSARTNNPEPGFQLINQRITHSTINDNIWASLQNAQIQALKTLDQRPAEKFAQQMYETRYADDRTKLLQENQIAQFTAADALAADRQLFSSPADITFVIVGNVAEDKLVALITRYLGSIKHSDSPLAAGKPLTRATDNASVTVKEQNEPVAQVSQWKRYDSRTPVNLPTRMALDAFNVALAKDLRVNIREQASGAYSVSSRLSVDPQAKDISHLLAFTCQPERHDELLTLANEVMVKRLAKGISEQELNEYQQNVQRSLDIQQRSVQQLANTIVNSLIQYDDPAAWTEQEQLLKQMTVENVNTAVKQYLSHPVNTYTGVLLPK.

A Zn(2+)-binding site is contributed by histidine 80. Residue glutamate 83 is the Proton acceptor of the active site. 2 residues coordinate Zn(2+): histidine 84 and glutamate 160.

The protein belongs to the peptidase M16 family. Requires Zn(2+) as cofactor.

This is Probable zinc protease PqqL (pqqL) from Escherichia coli (strain K12).